Here is a 106-residue protein sequence, read N- to C-terminus: Small ribosomal subunit protein uS10 (106 aa).

This sequence belongs to the universal ribosomal protein uS10 family. As to quaternary structure, part of the 30S ribosomal subunit.

Involved in the binding of tRNA to the ribosomes. The sequence is that of Small ribosomal subunit protein uS10 from Prochlorococcus marinus (strain MIT 9301).